The primary structure comprises 204 residues: Urease accessory protein UreG (204 aa).

GTP is bound at residue 11-18; it reads GPVGAGKH.

This sequence belongs to the SIMIBI class G3E GTPase family. UreG subfamily. In terms of assembly, homodimer. UreD, UreF and UreG form a complex that acts as a GTP-hydrolysis-dependent molecular chaperone, activating the urease apoprotein by helping to assemble the nickel containing metallocenter of UreC. The UreE protein probably delivers the nickel.

The protein resides in the cytoplasm. Functionally, facilitates the functional incorporation of the urease nickel metallocenter. This process requires GTP hydrolysis, probably effectuated by UreG. This Staphylococcus xylosus protein is Urease accessory protein UreG.